Here is a 359-residue protein sequence, read N- to C-terminus: Membrane-bound lytic murein transglycosylase C (359 aa).

Residues 1-16 form the signal peptide; it reads MKKYLALALIAPLLIS. Cys-17 carries the N-palmitoyl cysteine lipid modification. The S-diacylglycerol cysteine moiety is linked to residue Cys-17.

It belongs to the transglycosylase Slt family.

The protein localises to the cell outer membrane. The catalysed reaction is Exolytic cleavage of the (1-&gt;4)-beta-glycosidic linkage between N-acetylmuramic acid (MurNAc) and N-acetylglucosamine (GlcNAc) residues in peptidoglycan, from either the reducing or the non-reducing ends of the peptidoglycan chains, with concomitant formation of a 1,6-anhydrobond in the MurNAc residue.. Murein-degrading enzyme. May play a role in recycling of muropeptides during cell elongation and/or cell division. The protein is Membrane-bound lytic murein transglycosylase C of Escherichia coli O157:H7.